Here is a 1060-residue protein sequence, read N- to C-terminus: Carbamoyl phosphate synthase large chain (1060 aa).

The carboxyphosphate synthetic domain stretch occupies residues 1-401; the sequence is MPKRTDIRKI…SLLKACRSLE (401 aa). ATP-binding residues include arginine 129, arginine 169, glycine 175, glycine 176, arginine 208, isoleucine 210, glutamate 215, glycine 241, isoleucine 242, histidine 243, glutamine 284, and glutamate 298. Residues 133–327 form the ATP-grasp 1 domain; that stretch reads KQLMEELNQP…IAKLAAKIAV (195 aa). Positions 284, 298, and 300 each coordinate Mg(2+). Residues glutamine 284, glutamate 298, and asparagine 300 each coordinate Mn(2+). An oligomerization domain region spans residues 402-546; that stretch reads IGVDHIKIAD…YSTYAVENES (145 aa). The carbamoyl phosphate synthetic domain stretch occupies residues 547-929; the sequence is LISDKASILV…ALYKAFEAAY (383 aa). The ATP-grasp 2 domain maps to 671-861; that stretch reads EATLQALNIP…MAQVATKVIL (191 aa). ATP-binding residues include arginine 707, alanine 746, leucine 748, glutamate 752, glycine 777, valine 778, histidine 779, serine 780, glutamine 820, and glutamate 832. Residues glutamine 820, glutamate 832, and asparagine 834 each contribute to the Mg(2+) site. Mn(2+) is bound by residues glutamine 820, glutamate 832, and asparagine 834. The MGS-like domain occupies 930-1060; the sequence is LHMPDYGNIV…SRAFTLKVLD (131 aa). Residues 930-1060 are allosteric domain; that stretch reads LHMPDYGNIV…SRAFTLKVLD (131 aa).

The protein belongs to the CarB family. In terms of assembly, composed of two chains; the small (or glutamine) chain promotes the hydrolysis of glutamine to ammonia, which is used by the large (or ammonia) chain to synthesize carbamoyl phosphate. Tetramer of heterodimers (alpha,beta)4. Requires Mg(2+) as cofactor. Mn(2+) is required as a cofactor.

It catalyses the reaction hydrogencarbonate + L-glutamine + 2 ATP + H2O = carbamoyl phosphate + L-glutamate + 2 ADP + phosphate + 2 H(+). The enzyme catalyses hydrogencarbonate + NH4(+) + 2 ATP = carbamoyl phosphate + 2 ADP + phosphate + 2 H(+). It participates in amino-acid biosynthesis; L-arginine biosynthesis; carbamoyl phosphate from bicarbonate: step 1/1. Its pathway is pyrimidine metabolism; UMP biosynthesis via de novo pathway; (S)-dihydroorotate from bicarbonate: step 1/3. Large subunit of the glutamine-dependent carbamoyl phosphate synthetase (CPSase). CPSase catalyzes the formation of carbamoyl phosphate from the ammonia moiety of glutamine, carbonate, and phosphate donated by ATP, constituting the first step of 2 biosynthetic pathways, one leading to arginine and/or urea and the other to pyrimidine nucleotides. The large subunit (synthetase) binds the substrates ammonia (free or transferred from glutamine from the small subunit), hydrogencarbonate and ATP and carries out an ATP-coupled ligase reaction, activating hydrogencarbonate by forming carboxy phosphate which reacts with ammonia to form carbamoyl phosphate. The polypeptide is Carbamoyl phosphate synthase large chain (Streptococcus agalactiae serotype III (strain NEM316)).